The primary structure comprises 314 residues: Ribosomal RNA small subunit methyltransferase H (314 aa).

S-adenosyl-L-methionine contacts are provided by residues 35–37, aspartate 55, phenylalanine 79, aspartate 101, and glutamine 108; that span reads GGH. The disordered stretch occupies residues 276-296; it reads QGGQTLKPVGKKLMPSEAEVA.

It belongs to the methyltransferase superfamily. RsmH family.

It is found in the cytoplasm. The catalysed reaction is cytidine(1402) in 16S rRNA + S-adenosyl-L-methionine = N(4)-methylcytidine(1402) in 16S rRNA + S-adenosyl-L-homocysteine + H(+). Specifically methylates the N4 position of cytidine in position 1402 (C1402) of 16S rRNA. This chain is Ribosomal RNA small subunit methyltransferase H, found in Pectobacterium atrosepticum (strain SCRI 1043 / ATCC BAA-672) (Erwinia carotovora subsp. atroseptica).